The primary structure comprises 411 residues: Tyrosine--tRNA ligase (411 aa).

Positions 50–59 (PTRPDLHLGH) match the 'HIGH' region motif. The 'KMSKS' region signature appears at 236–240 (KMSKS). ATP is bound at residue Lys-239. One can recognise an S4 RNA-binding domain in the interval 345-409 (VSMAKLVVLA…GKDKFARLVL (65 aa)).

Belongs to the class-I aminoacyl-tRNA synthetase family. TyrS type 2 subfamily. In terms of assembly, homodimer.

The protein localises to the cytoplasm. The catalysed reaction is tRNA(Tyr) + L-tyrosine + ATP = L-tyrosyl-tRNA(Tyr) + AMP + diphosphate + H(+). Functionally, catalyzes the attachment of tyrosine to tRNA(Tyr) in a two-step reaction: tyrosine is first activated by ATP to form Tyr-AMP and then transferred to the acceptor end of tRNA(Tyr). The chain is Tyrosine--tRNA ligase from Deinococcus radiodurans (strain ATCC 13939 / DSM 20539 / JCM 16871 / CCUG 27074 / LMG 4051 / NBRC 15346 / NCIMB 9279 / VKM B-1422 / R1).